A 451-amino-acid chain; its full sequence is NADP-specific glutamate dehydrogenase (451 aa).

K114 is a catalytic residue.

It belongs to the Glu/Leu/Phe/Val dehydrogenases family. In terms of assembly, homohexamer.

The enzyme catalyses L-glutamate + NADP(+) + H2O = 2-oxoglutarate + NH4(+) + NADPH + H(+). This Fusarium fujikuroi (Bakanae and foot rot disease fungus) protein is NADP-specific glutamate dehydrogenase (GDH2).